Reading from the N-terminus, the 1805-residue chain is Kinesin-like protein KIF13A (1805 aa).

In terms of domain architecture, Kinesin motor spans 5-352; that stretch reads KVKVAVRVRP…LRYADRAKRI (348 aa). ATP is bound at residue 102 to 109; the sequence is GQTGSGKS. Residues 359 to 436 adopt a coiled-coil conformation; it reads NEDPNAKVIR…QLESMGISLE (78 aa). Residues 469 to 519 enclose the FHA domain; it reads HTRVGADTSQDIQLFGIGIQPQHCEIDIASDGDVTLTPKENARSCVNGTLV. A compositionally biased stretch (basic and acidic residues) spans 556–567; it reads EKETGPPEHDLD. Disordered regions lie at residues 556–575 and 633–656; these read EKET…ASSE and QQLS…SQTA. 2 coiled-coil regions span residues 602–775 and 1100–1138; these read VQVL…LYGK and DALI…EQWV. Phosphoserine is present on Ser636. Phosphoserine is present on Ser1287. Polar residues predominate over residues 1385 to 1396; sequence TPNVHNVSSSRP. The disordered stretch occupies residues 1385-1404; it reads TPNVHNVSSSRPDLSGFDED. Phosphoserine occurs at positions 1454, 1481, 1490, and 1494. The tract at residues 1507-1531 is disordered; it reads PSGSNGSSMPVEHNSKREKKIDSEE. Positions 1518–1547 form a coiled coil; that stretch reads EHNSKREKKIDSEEEENELEAINRKLISSQ. The span at 1519–1528 shows a compositional bias: basic and acidic residues; the sequence is HNSKREKKID. Phosphoserine is present on residues Ser1529 and Ser1572. The segment covering 1612–1621 has biased composition (low complexity); it reads MVVPSSDSSD. The interval 1612–1645 is disordered; it reads MVVPSSDSSDQLAIQTKDADSTEHSTPSLVHDFR. Phosphoserine occurs at positions 1648 and 1698. Residues 1749–1779 form a disordered region; it reads GLTDSSAGELSSRRSLPNKTGGKTVSDGLHH. Polar residues predominate over residues 1751 to 1771; that stretch reads TDSSAGELSSRRSLPNKTGGK.

The protein belongs to the TRAFAC class myosin-kinesin ATPase superfamily. Kinesin family. As to quaternary structure, interacts with AP2B1. Interacts with ZFYVE26. Interacts with AP1G1 and AP1G2. In terms of tissue distribution, widely expressed, with highest levels in heart, brain and skeletal muscle.

The protein resides in the cytoplasm. It localises to the cytoskeleton. Its subcellular location is the microtubule organizing center. The protein localises to the centrosome. It is found in the midbody. The protein resides in the endosome membrane. It localises to the golgi apparatus membrane. Plus end-directed microtubule-dependent motor protein involved in intracellular transport and regulating various processes such as mannose-6-phosphate receptor (M6PR) transport to the plasma membrane, endosomal sorting during melanosome biogenesis and cytokinesis. Mediates the transport of M6PR-containing vesicles from trans-Golgi network to the plasma membrane via direct interaction with the AP-1 complex. During melanosome maturation, required for delivering melanogenic enzymes from recycling endosomes to nascent melanosomes by creating peripheral recycling endosomal subdomains in melanocytes. Also required for the abscission step in cytokinesis: mediates translocation of ZFYVE26, and possibly TTC19, to the midbody during cytokinesis. The polypeptide is Kinesin-like protein KIF13A (KIF13A) (Homo sapiens (Human)).